Consider the following 262-residue polypeptide: 4-hydroxy-2-oxo-heptane-1,7-dioate aldolase (262 aa).

H45 functions as the Proton acceptor in the catalytic mechanism. Q147 is a substrate binding site. E149 serves as a coordination point for a divalent metal cation. Substrate is bound by residues A174 and D175. D175 contributes to the a divalent metal cation binding site.

The protein belongs to the HpcH/HpaI aldolase family. As to quaternary structure, homohexamer; trimer of dimers. It depends on a divalent metal cation as a cofactor.

The catalysed reaction is 4-hydroxy-2-oxoheptanedioate = succinate semialdehyde + pyruvate. It catalyses the reaction D-glyceraldehyde + 3-hydroxypyruvate = (3R,4S,5R)-3,4,5,6-tetrahydroxy-2-oxohexanoate. It carries out the reaction D-glyceraldehyde + 3-hydroxypyruvate = 2-dehydro-D-gluconate. The enzyme catalyses D-glyceraldehyde + 3-hydroxypyruvate = 2-dehydro-D-galactonate. The catalysed reaction is D-glyceraldehyde + pyruvate = 2-dehydro-3-deoxy-L-galactonate. It catalyses the reaction 2-dehydro-3-deoxy-D-gluconate = D-glyceraldehyde + pyruvate. Its pathway is aromatic compound metabolism; 4-hydroxyphenylacetate degradation; pyruvate and succinate semialdehyde from 4-hydroxyphenylacetate: step 7/7. Functionally, catalyzes the reversible retro-aldol cleavage of 4-hydroxy-2-ketoheptane-1,7-dioate (HKHD) to pyruvate and succinic semialdehyde. In vitro, can catalyze the aldolisation reaction between hydroxypyruvate (HPA) or pyruvate (PA) and D-glyceraldehyde (D-GA). The condensation of hydroxypyruvate and D-glyceraldehyde produces (3R,4S,5R)-3,4,5,6-tetrahydroxy-2-oxohexanoate as the major product, 2-dehydro-D-gluconate and 2-dehydro-D-galactonate. The condensation of pyruvate and D-glyceraldehyde produces 2-dehydro-3-deoxy-L-galactonate as the major product and 2-dehydro-3-deoxy-D-gluconate. This is 4-hydroxy-2-oxo-heptane-1,7-dioate aldolase from Escherichia coli (strain ATCC 8739 / DSM 1576 / NBRC 3972 / NCIMB 8545 / WDCM 00012 / Crooks).